The chain runs to 466 residues: Soluble pyridine nucleotide transhydrogenase (466 aa).

An FAD-binding site is contributed by 36-45 (ERYHNVGGGC).

It belongs to the class-I pyridine nucleotide-disulfide oxidoreductase family. FAD serves as cofactor.

It localises to the cytoplasm. It catalyses the reaction NAD(+) + NADPH = NADH + NADP(+). In terms of biological role, conversion of NADPH, generated by peripheral catabolic pathways, to NADH, which can enter the respiratory chain for energy generation. The chain is Soluble pyridine nucleotide transhydrogenase from Klebsiella pneumoniae subsp. pneumoniae (strain ATCC 700721 / MGH 78578).